The chain runs to 514 residues: Transcription termination factor Rho (514 aa).

Residues 25–52 are disordered; the sequence is EPSSTPGPARNARRSNRRMRHPDKDVDK. Basic residues predominate over residues 35-45; the sequence is NARRSNRRMRH. A Rho RNA-BD domain is found at 141 to 216; that stretch reads LMYGEGTLEI…LRIEAINHAD (76 aa). ATP-binding positions include 259–264, 271–276, and Arg-302; these read GFGQRG and RAGKTM.

This sequence belongs to the Rho family. As to quaternary structure, homohexamer. The homohexamer assembles into an open ring structure.

Its function is as follows. Facilitates transcription termination by a mechanism that involves Rho binding to the nascent RNA, activation of Rho's RNA-dependent ATPase activity, and release of the mRNA from the DNA template. This Rhodopirellula baltica (strain DSM 10527 / NCIMB 13988 / SH1) protein is Transcription termination factor Rho.